A 308-amino-acid chain; its full sequence is Olfactory receptor 8D1 (308 aa).

Residues 1–25 (MTMENYSMAAQFVLDGLTQQAELQL) lie on the Extracellular side of the membrane. N-linked (GlcNAc...) asparagine glycosylation is present at N5. Residues 26 to 46 (PLFLLFLGIYVVTVVGNLGMI) traverse the membrane as a helical segment. The Cytoplasmic segment spans residues 47–54 (LLIAVSPL). The helical transmembrane segment at 55 to 75 (LHTPMYYFLSSLSFVDFCYSS) threads the bilayer. Over 76–99 (VITPKMLVNFLGKKNTILYSECMV) the chain is Extracellular. Cysteines 97 and 189 form a disulfide. A helical transmembrane segment spans residues 100-120 (QLFFFVVFVVAEGYLLTAMAY). Residues 121 to 139 (DRYVAICSPLLYNAIMSSW) are Cytoplasmic-facing. Residues 140–160 (VCSLLVLAAFFLGFLSALTHT) form a helical membrane-spanning segment. Residues 161–197 (SAMMKLSFCKSHIINHYFCDVLPLLNLSCSNTHLNEL) lie on the Extracellular side of the membrane. Residue N186 is glycosylated (N-linked (GlcNAc...) asparagine). Residues 198–217 (LLFIIAGFNTLVPTLAVAVS) form a helical membrane-spanning segment. Residues 218–237 (YAFILYSILHIRSSEGRSKA) are Cytoplasmic-facing. A helical transmembrane segment spans residues 238 to 258 (FGTCSSHLMAVVIFFGSITFM). Topologically, residues 259–271 (YFKPPSSNSLDQE) are extracellular. A helical membrane pass occupies residues 272-292 (KVSSVFYTTVIPMLNPLIYSL). The Cytoplasmic portion of the chain corresponds to 293-308 (RNKDVKKALRKVLVGK).

The protein belongs to the G-protein coupled receptor 1 family. As to expression, expressed in the tongue.

It is found in the cell membrane. Functionally, odorant receptor (Potential). May be involved in taste perception. In Homo sapiens (Human), this protein is Olfactory receptor 8D1 (OR8D1).